We begin with the raw amino-acid sequence, 512 residues long: Serine palmitoyltransferase 3 (512 aa).

Position 345 is an N6-(pyridoxal phosphate)lysine (lysine 345).

The protein belongs to the class-II pyridoxal-phosphate-dependent aminotransferase family. In terms of assembly, heterodimer of sptl-1/sptl-3. It depends on pyridoxal 5'-phosphate as a cofactor.

It carries out the reaction L-serine + hexadecanoyl-CoA + H(+) = 3-oxosphinganine + CO2 + CoA. It participates in lipid metabolism; sphingolipid metabolism. Component of the serine palmitoyltransferase (SPT) that catalyzes the first committed step in sphingolipid biosynthesis, which is the condensation of an acyl-CoA species and L-serine. The catalytic core is composed of a heterodimer of sptl-1 and sptl-2 or sptl-1 and sptl-3. Required for the specification of abicobasal polarity and development of the gut lumen. The protein is Serine palmitoyltransferase 3 (sptl-3) of Caenorhabditis elegans.